A 419-amino-acid chain; its full sequence is Tyrosine--tRNA ligase (419 aa).

Tyr34 is a binding site for L-tyrosine. The 'HIGH' region signature appears at 39–48; that stretch reads PSGDSMHIGH. L-tyrosine contacts are provided by Tyr168 and Gln172. Positions 230–234 match the 'KMSKS' region motif; sequence KFGKS. Lys233 is a binding site for ATP. Residues 352–418 enclose the S4 RNA-binding domain; sequence VNLVDWLVTL…GKKKYFLVSY (67 aa).

Belongs to the class-I aminoacyl-tRNA synthetase family. TyrS type 1 subfamily. In terms of assembly, homodimer.

The protein localises to the cytoplasm. The catalysed reaction is tRNA(Tyr) + L-tyrosine + ATP = L-tyrosyl-tRNA(Tyr) + AMP + diphosphate + H(+). In terms of biological role, catalyzes the attachment of tyrosine to tRNA(Tyr) in a two-step reaction: tyrosine is first activated by ATP to form Tyr-AMP and then transferred to the acceptor end of tRNA(Tyr). This Listeria innocua serovar 6a (strain ATCC BAA-680 / CLIP 11262) protein is Tyrosine--tRNA ligase.